Here is an 88-residue protein sequence, read N- to C-terminus: Actobindin (88 aa).

At methionine 1 the chain carries N-acetylmethionine. The tract at residues 1-22 (MNPELQSAIGQGAALKHAETVD) is disordered. Lysine 35 is subject to N6,N6,N6-trimethyllysine. In terms of domain architecture, WH2 spans 37–54 (DRSSFLEEVAKPHELKHA). Lysine 72 carries the post-translational modification N6,N6,N6-trimethyllysine.

As to quaternary structure, monomer.

Its function is as follows. Is able to bind two actin monomers at high concentrations of G-actin. The chain is Actobindin from Acanthamoeba castellanii (Amoeba).